Reading from the N-terminus, the 1121-residue chain is tRNA (34-2'-O)-methyltransferase regulator WDR6 (1121 aa).

At methionine 1 the chain carries N-acetylmethionine. WD repeat units follow at residues 53–97 (IKRV…VVKI), 105–143 (WELWRSGLWNMSDWIWDARWLEGNIALALGHNSVVLYDP), 147–189 (CILQ…VWYP), 200–238 (APDRRISGHVGIIFSMSYLESKGLLATASEDRSVRIWKV), 247–285 (RVQNIGHCFGHSARVWQVKLLENYLISAGEDCVCLVWSH), 289–327 (ILQAFRGHQGRGIRAIAAHERQAWVITGGDDSGIRLWHL), 335–376 (LGVS…LYDV), 381–422 (WEQL…VVPI), 425–470 (PTAA…ISAA), 476–520 (IFVK…LFPS), 559–598 (PVSTLPSLHGKQGVTSVTCHGGYVYTTGRDGAYYQLFVRD), 604–642 (VLRQKSCRGMNWLAGLRIVPDGSMVILGFHANEFVVWNP), 645–684 (HEKLHIVNCGGGHRSWAFSDTEAAMAFAYLKDGDVMLYRA), 739–785 (LTDI…VWGI), 848–893 (RNRH…LFLL), 901–946 (QLLA…FWDL), 970–1012 (GTPS…VFVL), 1036–1073 (EEYSVPCAHAAHVTGLKILSPSIMVSASIDQRLTFWRL), and 1079–1121 (TFMN…NWYD).

This sequence belongs to the WD repeat WDR6 family. As to quaternary structure, interacts with FTSJ1; the interaction is direct, and required for 2'-O-methylation of position 34 in substrate tRNAs. Interacts with IRS4. Interacts with STK11/LKB1. Ubiquitous.

Its subcellular location is the cytoplasm. Functionally, together with methyltransferase FTSJ1, methylates the 2'-O-ribose of nucleotides at position 34 of the tRNA anticodon loop of substrate tRNAs. Required for the correct positioning of the substrate tRNA for methylation. Required to suppress amino acid starvation-induced autophagy. Enhances the STK11/LKB1-induced cell growth suppression activity. The chain is tRNA (34-2'-O)-methyltransferase regulator WDR6 (WDR6) from Homo sapiens (Human).